The following is a 546-amino-acid chain: Serine/threonine-protein kinase Chk2 (546 aa).

The interval 1–70 (MKSHHQSHSS…SSHSSSGTLS (70 aa)) is disordered. A compositionally biased stretch (low complexity) spans 8–70 (HSSTSSKAHD…SSHSSSGTLS (63 aa)). Residue T68 is modified to Phosphothreonine; by MAP3K20. S71 is modified (phosphoserine; by PLK3). T77 bears the Phosphothreonine; by ATM and MAP3K20 mark. S82 bears the Phosphoserine; by PLK3 mark. Residues 117-179 (YWFGRDKSCE…NGTFVNTELI (63 aa)) enclose the FHA domain. The region spanning 224–490 (YIMSKTLGSG…TEEALNHPWL (267 aa)) is the Protein kinase domain. ATP contacts are provided by residues 231–238 (GSGACGEV), K253, and 306–312 (ELMEGGE). D351 (proton acceptor) is an active-site residue. ATP is bound by residues 355-356 (EN) and D372. A T-loop/activation segment region spans residues 372 to 398 (DFGQSKILGETSLMRTLCGTPTYLAPE). A Phosphoserine; by autocatalysis modification is found at S383. A phosphothreonine; by autocatalysis mark is found at T387 and T391. Residue S460 is modified to Phosphoserine.

Belongs to the protein kinase superfamily. CAMK Ser/Thr protein kinase family. CHK2 subfamily. Homodimer. Homodimerization is part of the activation process but the dimer may dissociate following activation. Interacts with PML. Interacts with TP53. Interacts with RB1; phosphorylates RB1. Interacts with BRCA1. Interacts (phosphorylated at Thr-68) with MDC1; requires ATM-mediated phosphorylation of CHEK2. Interacts with TP53BP1; modulates CHEK2 phosphorylation at Thr-68 in response to ionizing radiation. Interacts with CDC25A; phosphorylates CDC25A and mediates its degradation in response to ionizing radiation. Interacts with CUL1; mediates CHEK2 ubiquitination and regulation. Interacts with CDKN2AIP. Interacts (via protein kinase domain) with CCAR2 (via N-terminus). Interacts with SIRT1. Mg(2+) serves as cofactor. In terms of processing, phosphorylated. Phosphorylated at Ser-82 by PLK3 in response to DNA damage, promoting phosphorylation at Thr-77 by ATM and the G2/M transition checkpoint. Phosphorylation at Thr-77 induces homodimerization. Autophosphorylates at Thr-387 and Thr-391 in the T-loop/activation segment upon dimerization to become fully active. DNA damage-induced autophosphorylation at Ser-383 induces CUL1-mediated ubiquitination and regulates the pro-apoptotic function. Phosphorylation at Ser-460 also regulates ubiquitination. Phosphorylated by PLK4. Post-translationally, ubiquitinated. CUL1-mediated ubiquitination regulates the pro-apoptotic function. Ubiquitination may also regulate protein stability. Ubiquitinated by RNF8 via 'Lys-48'-linked ubiquitination. In terms of tissue distribution, ubiquitously expressed with higher levels in the thymus, spleen and colon (at protein level).

Its subcellular location is the nucleus. The protein resides in the PML body. It localises to the nucleoplasm. It catalyses the reaction L-seryl-[protein] + ATP = O-phospho-L-seryl-[protein] + ADP + H(+). The catalysed reaction is L-threonyl-[protein] + ATP = O-phospho-L-threonyl-[protein] + ADP + H(+). Its activity is regulated as follows. Activated through phosphorylation at Thr-68 by ATM in response to DNA double-strand breaks. Activation is modulated by several mediators including MDC1 and TP53BP1. Induces homodimerization with exchange of the T-loop/activation segment between protomers and transphosphorylation of the protomers. The autophosphorylated kinase dimer is fully active. Negatively regulated by PPM1D through dephosphorylation of Thr-68. Serine/threonine-protein kinase which is required for checkpoint-mediated cell cycle arrest, activation of DNA repair and apoptosis in response to the presence of DNA double-strand breaks. May also negatively regulate cell cycle progression during unperturbed cell cycles. Following activation, phosphorylates numerous effectors preferentially at the consensus sequence [L-X-R-X-X-S/T]. Regulates cell cycle checkpoint arrest through phosphorylation of CDC25A, CDC25B and CDC25C, inhibiting their activity. Inhibition of CDC25 phosphatase activity leads to increased inhibitory tyrosine phosphorylation of CDK-cyclin complexes and blocks cell cycle progression. May also phosphorylate NEK6 which is involved in G2/M cell cycle arrest. Regulates DNA repair through phosphorylation of BRCA2, enhancing the association of RAD51 with chromatin which promotes DNA repair by homologous recombination. Also stimulates the transcription of genes involved in DNA repair (including BRCA2) through the phosphorylation and activation of the transcription factor FOXM1. Regulates apoptosis through the phosphorylation of p53/TP53, MDM4 and PML. Phosphorylation of p53/TP53 at 'Ser-20' by CHEK2 may alleviate inhibition by MDM2, leading to accumulation of active p53/TP53. Phosphorylation of MDM4 may also reduce degradation of p53/TP53. Also controls the transcription of pro-apoptotic genes through phosphorylation of the transcription factor E2F1. Tumor suppressor, it may also have a DNA damage-independent function in mitotic spindle assembly by phosphorylating BRCA1. Its absence may be a cause of the chromosomal instability observed in some cancer cells. Promotes the CCAR2-SIRT1 association and is required for CCAR2-mediated SIRT1 inhibition. Under oxidative stress, promotes ATG7 ubiquitination by phosphorylating the E3 ubiquitin ligase TRIM32 at 'Ser-56' leading to positive regulation of the autophagosme assembly. This chain is Serine/threonine-protein kinase Chk2, found in Mus musculus (Mouse).